Reading from the N-terminus, the 457-residue chain is Glutamate--tRNA ligase 2 (457 aa).

Residues 9–19 (PSPTGYIHIGN) carry the 'HIGH' region motif. The 'KMSKS' region signature appears at 250-254 (GLSKR). Residue lysine 253 coordinates ATP.

The protein belongs to the class-I aminoacyl-tRNA synthetase family. Glutamate--tRNA ligase type 1 subfamily. Monomer.

It is found in the cytoplasm. It carries out the reaction tRNA(Glu) + L-glutamate + ATP = L-glutamyl-tRNA(Glu) + AMP + diphosphate. Its function is as follows. Catalyzes the attachment of glutamate to tRNA(Glu) in a two-step reaction: glutamate is first activated by ATP to form Glu-AMP and then transferred to the acceptor end of tRNA(Glu). The chain is Glutamate--tRNA ligase 2 from Brucella melitensis biotype 1 (strain ATCC 23456 / CCUG 17765 / NCTC 10094 / 16M).